Consider the following 529-residue polypeptide: Bifunctional purine biosynthesis protein PurH (529 aa).

The region spanning 1-148 (MQQRRPVRRA…KNHKDVAIVV (148 aa)) is the MGS-like domain. An N6-acetyllysine modification is found at Lys-287.

Belongs to the PurH family.

The catalysed reaction is (6R)-10-formyltetrahydrofolate + 5-amino-1-(5-phospho-beta-D-ribosyl)imidazole-4-carboxamide = 5-formamido-1-(5-phospho-D-ribosyl)imidazole-4-carboxamide + (6S)-5,6,7,8-tetrahydrofolate. The enzyme catalyses IMP + H2O = 5-formamido-1-(5-phospho-D-ribosyl)imidazole-4-carboxamide. The protein operates within purine metabolism; IMP biosynthesis via de novo pathway; 5-formamido-1-(5-phospho-D-ribosyl)imidazole-4-carboxamide from 5-amino-1-(5-phospho-D-ribosyl)imidazole-4-carboxamide (10-formyl THF route): step 1/1. It functions in the pathway purine metabolism; IMP biosynthesis via de novo pathway; IMP from 5-formamido-1-(5-phospho-D-ribosyl)imidazole-4-carboxamide: step 1/1. This is Bifunctional purine biosynthesis protein PurH from Escherichia coli O157:H7.